The primary structure comprises 389 residues: 5-amino-6-(D-ribitylamino)uracil--L-tyrosine 4-hydroxyphenyl transferase (389 aa).

In terms of domain architecture, Radical SAM core spans 56-298; it reads VSYVINRNIN…QAVARLFFGR (243 aa). Cys-70, Cys-74, and Cys-77 together coordinate [4Fe-4S] cluster.

This sequence belongs to the radical SAM superfamily. CofH family. In terms of assembly, consists of two subunits, CofG and CofH. [4Fe-4S] cluster serves as cofactor.

The enzyme catalyses 5-amino-6-(D-ribitylamino)uracil + L-tyrosine + S-adenosyl-L-methionine = 5-amino-5-(4-hydroxybenzyl)-6-(D-ribitylimino)-5,6-dihydrouracil + 2-iminoacetate + 5'-deoxyadenosine + L-methionine + H(+). It functions in the pathway cofactor biosynthesis; coenzyme F0 biosynthesis. In terms of biological role, catalyzes the radical-mediated synthesis of 5-amino-5-(4-hydroxybenzyl)-6-(D-ribitylimino)-5,6-dihydrouracil from 5-amino-6-(D-ribitylamino)uracil and L-tyrosine. The sequence is that of 5-amino-6-(D-ribitylamino)uracil--L-tyrosine 4-hydroxyphenyl transferase from Gloeobacter violaceus (strain ATCC 29082 / PCC 7421).